The primary structure comprises 163 residues: Protein FAM167B (163 aa).

The stretch at 73–132 (FDSMDSALEWLRRELREMQAQDRQLAGQLLRLRAQLHRLKMDQACHLHQELLDEAELELE) forms a coiled coil.

The protein belongs to the FAM167 (SEC) family.

This Homo sapiens (Human) protein is Protein FAM167B (FAM167B).